Here is a 452-residue protein sequence, read N- to C-terminus: Interferon-induced protein 44-like (452 aa).

The TLDc domain occupies 1 to 159; sequence MEVTTRLTWN…YLECEVFRVE (159 aa).

The protein belongs to the IFI44 family. In terms of assembly, interacts with FKBP5; this interaction modulates IKBKB and IKBKE kinase activities.

It is found in the cytoplasm. Its function is as follows. Type I interferon-stimulated gene (ISG) that plays a critical role in antiviral and antibacterial activity. During bacterial infection, promotes macrophage differentiation and facilitates inflammatory cytokine secretion. Plays a role in the control of respiratory syncytial virus/RSV infection, reducing the ability of the virus to replicate. Exhibits a low antiviral activity against hepatitis C virus. Also acts as a feedback regulator of IFN responses by negatively regulating IKBKB and IKBKE kinase activities through interaction with FKBP5. This chain is Interferon-induced protein 44-like (IFI44L), found in Homo sapiens (Human).